The primary structure comprises 158 residues: UPF0336 protein Mb0654 (158 aa).

This sequence belongs to the UPF0336 family.

This chain is UPF0336 protein Mb0654, found in Mycobacterium bovis (strain ATCC BAA-935 / AF2122/97).